Here is a 356-residue protein sequence, read N- to C-terminus: Glucose 1-dehydrogenase 2 (356 aa).

Asp38 is a Zn(2+) binding site. Residue Ser40 coordinates substrate. Residues His64 and Glu65 each contribute to the Zn(2+) site. Residues Glu114 and Glu150 each contribute to the substrate site. Residue Glu150 coordinates Zn(2+). NADP(+) contacts are provided by residues 181–184 (NGNL), 206–207 (RR), and 301–303 (VVN). Substrate is bound at residue Asn303.

It belongs to the zinc-containing alcohol dehydrogenase family. Glucose 1-dehydrogenase subfamily. Zn(2+) serves as cofactor.

It catalyses the reaction D-glucose + NAD(+) = D-glucono-1,5-lactone + NADH + H(+). The catalysed reaction is D-glucose + NADP(+) = D-glucono-1,5-lactone + NADPH + H(+). Catalyzes the NAD(P)(+)-dependent oxidation of D-glucose to D-gluconate via gluconolactone. Can utilize both NAD(+) and NADP(+) as electron acceptor. Is involved in the degradation of glucose through a modified Entner-Doudoroff pathway. This Haloterrigena turkmenica (strain ATCC 51198 / DSM 5511 / JCM 9101 / NCIMB 13204 / VKM B-1734 / 4k) (Halococcus turkmenicus) protein is Glucose 1-dehydrogenase 2.